A 346-amino-acid chain; its full sequence is Peripherin-2 (346 aa).

Residues 1 to 24 (MALLKVKFDQKKRVKLAQGLWLMN) lie on the Cytoplasmic side of the membrane. Residues 25–43 (WLSVLAGIVLFSLGLFLKI) traverse the membrane as a helical segment. Residues 44-61 (ELRKRSEVMNNSESHFVP) lie on the Lumenal side of the membrane. An N-linked (GlcNAc...) asparagine glycan is attached at Asn-53. Residues 62-80 (NSLIGVGVLSCVFNSLAGK) form a helical membrane-spanning segment. The Cytoplasmic segment spans residues 81 to 99 (ICYDALDPAKYAKWKPWLK). A helical transmembrane segment spans residues 100–123 (PYLAVCIFFNVILFLVALCCFLLR). Topologically, residues 124–264 (GSLESTLAYG…LNYYSSLMNS (141 aa)) are lumenal. Residue Asn-229 is glycosylated (N-linked (GlcNAc...) asparagine). Residues 265-290 (MGVVTLLVWLFEVSITAGLRYLHTAL) traverse the membrane as a helical segment. Over 291–346 (ESVSNPEDPECESEGWLLEKSVPETWKAFLESFKKLGKSNQVEAEGADAGPAPEAG) the chain is Cytoplasmic. Residues 341–346 (PAPEAG) form an interaction with MREG region.

The protein belongs to the PRPH2/ROM1 family. Homodimer; disulfide-linked. Forms a homotetramer. Forms a heterotetramer with ROM1. Homotetramer and heterotetramer core complexes go on to form higher order complexes by formation of intermolecular disulfide bonds. Interacts with MREG. Interacts with STX3 isoform 3B. Interacts with SNAP25. As to expression, expressed in the retina (at protein level).

Its subcellular location is the membrane. It localises to the cell projection. The protein resides in the cilium. It is found in the photoreceptor outer segment. The protein localises to the photoreceptor inner segment. In terms of biological role, essential for retina photoreceptor outer segment disk morphogenesis, may also play a role with ROM1 in the maintenance of outer segment disk structure. Required for the maintenance of retinal outer nuclear layer thickness. Required for the correct development and organization of the photoreceptor inner segment. This chain is Peripherin-2 (Prph2), found in Mus musculus (Mouse).